A 336-amino-acid chain; its full sequence is Coproporphyrin III ferrochelatase (336 aa).

The Fe-coproporphyrin III site is built by serine 52 and tyrosine 116. Residues histidine 172 and glutamate 255 each contribute to the Fe(2+) site.

The protein belongs to the ferrochelatase family.

The protein localises to the cytoplasm. It catalyses the reaction Fe-coproporphyrin III + 2 H(+) = coproporphyrin III + Fe(2+). It participates in porphyrin-containing compound metabolism; protoheme biosynthesis. In terms of biological role, involved in coproporphyrin-dependent heme b biosynthesis. Catalyzes the insertion of ferrous iron into coproporphyrin III to form Fe-coproporphyrin III. The chain is Coproporphyrin III ferrochelatase from Mycolicibacterium paratuberculosis (strain ATCC BAA-968 / K-10) (Mycobacterium paratuberculosis).